The sequence spans 170 residues: Shikimate kinase (170 aa).

Leu-11–Thr-16 serves as a coordination point for ATP. Ser-15 is a Mg(2+) binding site. Substrate-binding residues include Asp-33, Arg-57, and Gly-79. Arg-119 is an ATP binding site. Arg-137 lines the substrate pocket.

It belongs to the shikimate kinase family. As to quaternary structure, monomer. It depends on Mg(2+) as a cofactor.

It localises to the cytoplasm. It carries out the reaction shikimate + ATP = 3-phosphoshikimate + ADP + H(+). The protein operates within metabolic intermediate biosynthesis; chorismate biosynthesis; chorismate from D-erythrose 4-phosphate and phosphoenolpyruvate: step 5/7. Functionally, catalyzes the specific phosphorylation of the 3-hydroxyl group of shikimic acid using ATP as a cosubstrate. This is Shikimate kinase from Clostridium botulinum (strain Loch Maree / Type A3).